A 208-amino-acid polypeptide reads, in one-letter code: Large ribosomal subunit protein uL4 (208 aa).

The segment at 44–85 is disordered; that stretch reads RQGTKKTKTRAEVRGGGKKPWRQKGTGRARQGSIRAPHWRGG. The segment covering 59 to 70 has biased composition (basic residues); sequence GGKKPWRQKGTG.

It belongs to the universal ribosomal protein uL4 family. In terms of assembly, part of the 50S ribosomal subunit.

Its function is as follows. One of the primary rRNA binding proteins, this protein initially binds near the 5'-end of the 23S rRNA. It is important during the early stages of 50S assembly. It makes multiple contacts with different domains of the 23S rRNA in the assembled 50S subunit and ribosome. Forms part of the polypeptide exit tunnel. This chain is Large ribosomal subunit protein uL4, found in Mesoplasma florum (strain ATCC 33453 / NBRC 100688 / NCTC 11704 / L1) (Acholeplasma florum).